The chain runs to 155 residues: RNA pyrophosphohydrolase (155 aa).

A Nudix hydrolase domain is found at 5–147 (KYRPNVAAII…KRQVYRQVIA (143 aa)). The Nudix box signature appears at 42 to 63 (GGIDEGETPLEALYRELLEEIG).

The protein belongs to the Nudix hydrolase family. RppH subfamily. The cofactor is a divalent metal cation.

Functionally, accelerates the degradation of transcripts by removing pyrophosphate from the 5'-end of triphosphorylated RNA, leading to a more labile monophosphorylated state that can stimulate subsequent ribonuclease cleavage. The protein is RNA pyrophosphohydrolase of Helicobacter pylori (strain P12).